Here is a 225-residue protein sequence, read N- to C-terminus: Small ribosomal subunit protein eS1 (225 aa).

This sequence belongs to the eukaryotic ribosomal protein eS1 family.

This is Small ribosomal subunit protein eS1 from Methanococcus maripaludis (strain DSM 14266 / JCM 13030 / NBRC 101832 / S2 / LL).